The sequence spans 173 residues: VQ motif-containing protein 31 (173 aa).

Residues 27–36 (FREIVQRLTG) carry the VQ motif. T46 bears the Phosphothreonine mark. Disordered regions lie at residues 76-105 (EIVKPPLSFKPTGTTPSSKSGNTNLLTSPV) and 143-173 (LHPSPRSKPGYTEPELLTLFPLTSPNSSGKP). Polar residues predominate over residues 86 to 105 (PTGTTPSSKSGNTNLLTSPV). Phosphoserine is present on residues S92, S103, S146, and S149. A compositionally biased stretch (low complexity) spans 154-165 (TEPELLTLFPLT). The residue at position 165 (T165) is a Phosphothreonine. Phosphoserine occurs at positions 166 and 170.

In terms of processing, phosphorylated on serine and threonine residues by MPK6.

Its subcellular location is the nucleus. In terms of biological role, may modulate WRKY transcription factor activities. The polypeptide is VQ motif-containing protein 31 (Arabidopsis thaliana (Mouse-ear cress)).